We begin with the raw amino-acid sequence, 499 residues long: Cryptochrome-1 (499 aa).

Residues Arg-190, Ser-218, Ser-220, Gln-261, His-328, 360-362, Cys-366, and Asn-369 contribute to the FAD site; that span reads DAD.

It belongs to the DNA photolyase class-1 family. Interacts with tim and per; promoted by light conditions. FAD is required as a cofactor.

It localises to the cytoplasm. Its subcellular location is the perinuclear region. The protein resides in the nucleus. Functionally, blue light-dependent regulator that is the input of the circadian feedback loop. Has no photolyase activity for cyclobutane pyrimidine dimers or 6-4 photoproducts. Regulation of expression by light suggests a role in photoreception for locomotor activity rhythms. Functions, together with per, as a transcriptional repressor required for the oscillation of peripheral circadian clocks and for the correct specification of clock cells. Genes directly activated by the transcription factors Clock (Clk) and cycle (cyc) are repressed by cry. This is Cryptochrome-1 from Culex quinquefasciatus (Southern house mosquito).